The primary structure comprises 927 residues: Protein unc-45 homolog B (927 aa).

TPR repeat units follow at residues 4–37 (PVQLKEEGNKYFQSNEYGQAIQCYSKALKLITDK), 41–74 (AVLYRNRSACYLKQDNYVQAAADASKAIDVDASD), and 76–108 (KALFRRCQALEKLGKLDQAYKDVQRCATLEPKN). ARM repeat units follow at residues 167–206 (DAGAEQIFQNNGVNLLMQLIESKDPEMILSAIRTLSGMCT), 209–248 (RARATAIVHLVGINKICSIMAVDNEEIALAACNLLQNIVD), and 746–785 (DKLRQKIIKEKALPEIENYMFENHEQIRQAATECMCNLAL).

Detected initially throughout the somites and the heart and gradually also expressed in the jaw, branchial arches and body wall muscles at later embryonic stages.

The protein resides in the cytoplasm. It localises to the myofibril. Its subcellular location is the sarcomere. It is found in the z line. The protein localises to the a band. The protein resides in the perinuclear region. It localises to the cytosol. Its function is as follows. Acts as a co-chaperone for HSP90 and is required for proper folding of the myosin motor domain. Plays a role in sarcomere formation during muscle cell development. Is necessary for normal early lens development. The protein is Protein unc-45 homolog B of Xenopus tropicalis (Western clawed frog).